The chain runs to 64 residues: Disintegrin lebein-1-beta (64 aa).

One can recognise a Disintegrin domain in the interval Asn-1 to Asp-64. Disulfide bonds link Cys-6/Cys-29, Cys-20/Cys-26, Cys-25/Cys-50, and Cys-38/Cys-57. The short motif at Arg-42–Asp-44 is the Cell attachment site element.

Belongs to the disintegrin family. Dimeric disintegrin subfamily. As to quaternary structure, heterodimer with subunit alpha; disulfide-linked. In terms of tissue distribution, expressed by the venom gland.

It localises to the secreted. Its function is as follows. Strongly inhibits ADP-induced platelet aggregation on human platelet-rich plasma. Also avidly binds to the laminin-binding beta-1 integrins (alpha-3/beta-1, alpha-6/beta-1, and alpha-7/beta-1) in an RGD-independent manner. The polypeptide is Disintegrin lebein-1-beta (Macrovipera lebetinus (Levantine viper)).